The following is a 166-amino-acid chain: Signal peptidase complex catalytic subunit SEC11 (166 aa).

The Cytoplasmic segment spans residues 1–9 (MNLRQQLTQ). The chain crosses the membrane as a helical; Signal-anchor for type II membrane protein span at residues 10–31 (LLSIAYVFTSAFVAWKALSIVA). The Lumenal segment spans residues 32–166 (NSHSPIVVVL…MGLSALLSGE (135 aa)). Residues Ser44, His83, and Asp108 each act as charge relay system in the active site. The segment at 152-163 (ALLGFMGLSALL) is C-terminal short (CTS) helix.

It belongs to the peptidase S26B family. Component of the signal peptidase complex (SPC) composed of a catalytic subunit SEC11 and three accessory subunits SPC1, SPC2 and SPC3. The complex induces a local thinning of the ER membrane which is used to measure the length of the signal peptide (SP) h-region of protein substrates. This ensures the selectivity of the complex towards h-regions shorter than 18-20 amino acids. SPC associates with the translocon complex.

The protein resides in the endoplasmic reticulum membrane. The catalysed reaction is Cleavage of hydrophobic, N-terminal signal or leader sequences from secreted and periplasmic proteins.. In terms of biological role, catalytic component of the signal peptidase complex (SPC) which catalyzes the cleavage of N-terminal signal sequences from nascent proteins as they are translocated into the lumen of the endoplasmic reticulum. Specifically cleaves N-terminal signal peptides that contain a hydrophobic alpha-helix (h-region) shorter than 18-20 amino acids. This Clavispora lusitaniae (strain ATCC 42720) (Yeast) protein is Signal peptidase complex catalytic subunit SEC11 (SEC11).